We begin with the raw amino-acid sequence, 600 residues long: Elongation factor 4 (600 aa).

The tr-type G domain maps to 5–187; it reads KYIRNFSIIA…AIVNKLPPPK (183 aa). Residues 17-22 and 134-137 each bind GTP; these read DHGKST and NKID.

It belongs to the TRAFAC class translation factor GTPase superfamily. Classic translation factor GTPase family. LepA subfamily.

The protein localises to the cell inner membrane. It carries out the reaction GTP + H2O = GDP + phosphate + H(+). Functionally, required for accurate and efficient protein synthesis under certain stress conditions. May act as a fidelity factor of the translation reaction, by catalyzing a one-codon backward translocation of tRNAs on improperly translocated ribosomes. Back-translocation proceeds from a post-translocation (POST) complex to a pre-translocation (PRE) complex, thus giving elongation factor G a second chance to translocate the tRNAs correctly. Binds to ribosomes in a GTP-dependent manner. This chain is Elongation factor 4, found in Rickettsia felis (strain ATCC VR-1525 / URRWXCal2) (Rickettsia azadi).